Here is a 257-residue protein sequence, read N- to C-terminus: Pyridoxine 5'-phosphate synthase (257 aa).

Residue Asn12 participates in 3-amino-2-oxopropyl phosphate binding. 14-15 contacts 1-deoxy-D-xylulose 5-phosphate; the sequence is DH. 3-amino-2-oxopropyl phosphate is bound at residue Arg23. The active-site Proton acceptor is His48. 1-deoxy-D-xylulose 5-phosphate-binding residues include Arg50 and His55. The active-site Proton acceptor is the Glu75. Residue Thr105 participates in 1-deoxy-D-xylulose 5-phosphate binding. His199 serves as the catalytic Proton donor. Residues Gly200 and 221-222 each bind 3-amino-2-oxopropyl phosphate; that span reads GH.

This sequence belongs to the PNP synthase family. Homooctamer; tetramer of dimers.

The protein resides in the cytoplasm. The catalysed reaction is 3-amino-2-oxopropyl phosphate + 1-deoxy-D-xylulose 5-phosphate = pyridoxine 5'-phosphate + phosphate + 2 H2O + H(+). Its pathway is cofactor biosynthesis; pyridoxine 5'-phosphate biosynthesis; pyridoxine 5'-phosphate from D-erythrose 4-phosphate: step 5/5. Catalyzes the complicated ring closure reaction between the two acyclic compounds 1-deoxy-D-xylulose-5-phosphate (DXP) and 3-amino-2-oxopropyl phosphate (1-amino-acetone-3-phosphate or AAP) to form pyridoxine 5'-phosphate (PNP) and inorganic phosphate. This is Pyridoxine 5'-phosphate synthase from Xanthobacter autotrophicus (strain ATCC BAA-1158 / Py2).